The following is a 282-amino-acid chain: Acyl-CoA-binding domain-containing protein 6 (282 aa).

A compositionally biased stretch (polar residues) spans 1–12 (MASSFLPSGATT). The segment at 1–34 (MASSFLPSGATTGDSGGELSSGDDSGDVESLQSP) is disordered. The span at 17–31 (GELSSGDDSGDVESL) shows a compositional bias: low complexity. Serine 41 carries the post-translational modification Phosphoserine. The region spanning 42–127 (LPELFEKAAE…VKKLDPSWNP (86 aa)) is the ACB domain. An acyl-CoA contacts are provided by residues 69–73 (YARYK) and lysine 95. A Phosphoserine modification is found at serine 106. An an acyl-CoA-binding site is contributed by tyrosine 114. 2 ANK repeats span residues 191-220 (EGRTLLHWACDRGHKELVTVLLQYRADINC) and 224-253 (EGQTALHYAAACEFLDIVELLLQSGADPTL).

In terms of assembly, monomer.

Its subcellular location is the cytoplasm. Functionally, binds long-chain acyl-coenzyme A molecules with a strong preference for unsaturated C18:1-CoA, lower affinity for unsaturated C20:4-CoA, and very weak affinity for saturated C16:0-CoA. Does not bind fatty acids. The protein is Acyl-CoA-binding domain-containing protein 6 (ACBD6) of Bos taurus (Bovine).